The sequence spans 476 residues: Ankyrin repeat, SAM and basic leucine zipper domain-containing protein 1 (476 aa).

Phosphoserine is present on residues Ser-18 and Ser-21. ANK repeat units follow at residues 46–75 (EKNE…SIDS), 79–108 (YGWT…NASF), 111–145 (DKQT…DPNV), 149–178 (RLMT…EVNT), 182–211 (NGYT…DKML), and 215–244 (DGKT…PLEG). The region spanning 273–335 (SYAAFEDLEI…KILAALKELE (63 aa)) is the SAM domain.

Interacts with DDX4, PIWIL1, RANBP9 and TDRD1.

It localises to the cytoplasm. Plays a central role during spermatogenesis by repressing transposable elements and preventing their mobilization, which is essential for the germline integrity. Acts via the piRNA metabolic process, which mediates the repression of transposable elements during meiosis by forming complexes composed of piRNAs and Piwi proteins and governs the methylation and subsequent repression of transposons. Its association with pi-bodies suggests a participation in the primary piRNAs metabolic process. Required prior to the pachytene stage to facilitate the production of multiple types of piRNAs, including those associated with repeats involved in the regulation of retrotransposons. May act by mediating protein-protein interactions during germ cell maturation. The protein is Ankyrin repeat, SAM and basic leucine zipper domain-containing protein 1 (ASZ1) of Dasypus novemcinctus (Nine-banded armadillo).